Here is a 135-residue protein sequence, read N- to C-terminus: Protein PsiE homolog (135 aa).

Helical transmembrane passes span 20–40, 54–74, 82–102, and 107–127; these read VGLI…TFHL, YMLI…ALIV, HFPL…LIIV, and PIDT…LYLA.

Belongs to the PsiE family.

It localises to the cell inner membrane. The chain is Protein PsiE homolog from Yersinia enterocolitica serotype O:8 / biotype 1B (strain NCTC 13174 / 8081).